The sequence spans 577 residues: MFS-type transporter CPUR_05422 (577 aa).

Residues 1-49 are disordered; the sequence is MSAMSAMGKPEHGSATTSDLEHRATESSLEKQDVEAAPPGPVKPVDPSP. Basic and acidic residues predominate over residues 19 to 34; the sequence is DLEHRATESSLEKQDV. Residues 38 to 47 show a composition bias toward pro residues; it reads PPGPVKPVDP. Helical transmembrane passes span 52–72, 93–113, 123–143, 157–177, 184–204, 212–232, 249–269, 285–305, 326–346, 359–379, 383–403, 416–436, 449–469, and 525–545; these read STLK…LVAV, DVGW…LLFG, VVLL…GAAP, VGSA…IPLA, GLMG…GGAF, WCFY…FFYF, ILSL…CLLL, IIVL…VQIC, FLTT…IPIW, GIQL…GGLL, IGYY…GAGL, VIGY…TPNL, MGIA…VAVG, and VFIV…CMEW. Residues 554–577 are disordered; the sequence is PPAGPPAGAPTESAPVETKAAGHT.

It belongs to the major facilitator superfamily. TCR/Tet family.

It is found in the membrane. MFS-type transporter; part of the ergochrome gene cluster responsible for the typical purple-black color of the ergot sclerotia. The ergochrome gene cluster produces several ergot pigments including the yellow ergochrome secalonic acid and its derivatives, as well as the red anthraquinones endocrocin and clavorubin. The protein is MFS-type transporter CPUR_05422 of Claviceps purpurea (strain 20.1) (Ergot fungus).